We begin with the raw amino-acid sequence, 132 residues long: Small ribosomal subunit protein uS9 (132 aa).

The interval Lys-101–Arg-132 is disordered. Residues Lys-113 to Arg-132 show a composition bias toward basic residues.

It belongs to the universal ribosomal protein uS9 family.

This is Small ribosomal subunit protein uS9 from Staphylococcus aureus (strain USA300).